The sequence spans 630 residues: A-type voltage-gated potassium channel KCND2 (630 aa).

Residues 1-184 lie on the Cytoplasmic side of the membrane; that stretch reads MAAGVAAWLP…FENPHTSTMA (184 aa). The segment at 2 to 20 is interaction with KCNIP1, KCNIP2, and other family members; the sequence is AAGVAAWLPFARAAAIGWM. The residue at position 38 (Thr38) is a Phosphothreonine. Residues 71 to 90 are interaction with KCNIP1; that stretch reads ERDFFYHPETQQYFFDRDPD. Zn(2+) is bound by residues His105, Cys111, Cys132, and Cys133. Residues 185-206 traverse the membrane as a helical segment; the sequence is LVFYYVTGFFIAVSVIANVVET. Residues 207–226 are Extracellular-facing; that stretch reads VPCGSSPGHIKELPCGERYA. A helical transmembrane segment spans residues 227-249; the sequence is VAFFCLDTACVMIFTVEYLLRLA. At 250–256 the chain is on the cytoplasmic side; sequence AAPSRYR. The chain crosses the membrane as a helical span at residues 257–281; sequence FVRSVMSIIDVVAILPYYIGLVMTD. Over 282-287 the chain is Extracellular; sequence NEDVSG. The helical; Voltage-sensor transmembrane segment at 288-307 threads the bilayer; sequence AFVTLRVFRVFRIFKFSRHS. Over 308-321 the chain is Cytoplasmic; that stretch reads QGLRILGYTLKSCA. Residues 308 to 321 form an S4-S5 linker region; that stretch reads QGLRILGYTLKSCA. Residues 322 to 345 form a helical membrane-spanning segment; the sequence is SELGFLLFSLTMAIIIFATVMFYA. The Extracellular segment spans residues 346-357; it reads EKGSSASKFTSI. An intramembrane region (helical) is located at residues 358–369; it reads PAAFWYTIVTMT. 4 residues coordinate K(+): Thr370, Leu371, Gly372, and Tyr373. A Selectivity filter motif is present at residues 370 to 375; it reads TLGYGD. An intramembrane segment occupies 370–377; sequence TLGYGDMV. Residues 378-380 are Extracellular-facing; the sequence is PKT. Residues 381 to 403 traverse the membrane as a helical segment; sequence IAGKIFGSICSLSGVLVIALPVP. Over 404–630 the chain is Cytoplasmic; that stretch reads VIVSNFSRIY…GGNIVRVSAL (227 aa). Residue Ser438 is modified to Phosphoserine. Residues 474-489 are required for dendritic targeting; it reads FETQHHHLLHCLEKTT. Positions 474-630 are important for normal channel activation and inactivation, for interaction with KCNIP2, and probably other family members as well; the sequence is FETQHHHLLH…GGNIVRVSAL (157 aa). Residues Ser548, Ser552, Ser572, and Ser575 each carry the phosphoserine modification. The segment at 600-623 is disordered; it reads IPTPPVTTPEGDDRPESPEYSGGN. Phosphothreonine occurs at positions 602 and 607. Residue Ser616 is modified to Phosphoserine. The short motif at 627–630 is the PDZ-binding element; sequence VSAL.

The protein belongs to the potassium channel family. D (Shal) (TC 1.A.1.2) subfamily. Kv4.2/KCND2 sub-subfamily. In terms of assembly, homotetramer or heterotetramer with KCND1 or KCND3. Associates with the regulatory subunits KCNIP1, KCNIP2, KCNIP3 and KCNIP4. Interacts with DPP6, DPP10, DLG4 and DLG1. In vivo, probably exists as heteromeric complex containing variable proportions of KCND1, KCND2, KCND3, KCNIP1, KCNIP2, KCNIP3, KCNIP4, DPP6 and DPP10. The tetrameric channel can associate with up to four regulatory subunits, such as KCNIP2 or KCNIP4. Interaction with KCNIP3 promotes tetramerization and formation of a functional potassium channel. Interaction with four KCNIP4 chains does not reduce interaction with DPP10. Probably part of a complex consisting of KCNIP1, KCNIP2 isoform 3 and KCND2. Interacts with FLNA and FLNC. Interacts with NCS1/FREQ. Identified in a complex with cAMP-dependent protein kinase (PKA), CAV3, AKAP6 and KCND3 in cardiac myocytes. Interacts (via S1 and S2 helices) with DPP6; this interaction stabilizes the conformation of the S1-S2 helices and facilitates S4 conformational change, including S4 sliding up and down, thereby accelerating activation, inactivation, and recovery. In terms of processing, phosphorylation at Ser-438 in response to MAPK activation is increased in stimulated dendrites. Interaction with KCNIP2 and DPP6 propomtes phosphorylation by PKA at Ser-552. Phosphorylation at Ser-552 has no effect on interaction with KCNIP3, but is required for the regulation of channel activity by KCNIP3. Phosphorylation at Ser-552 leads to KCND2 internalization. Phosphorylated by MAPK in response to signaling via the metabotropic glutamate receptor GRM5. Phosphorylation at Ser-616 is required for the down-regulation of neuronal A-type currents in response to signaling via GRM5. Detected in brain frontal cortex.

The protein localises to the cell membrane. It localises to the cell projection. It is found in the dendrite. Its subcellular location is the synapse. The protein resides in the perikaryon. The protein localises to the postsynaptic cell membrane. It localises to the dendritic spine. It is found in the sarcolemma. Its subcellular location is the cell junction. The protein resides in the membrane. The protein localises to the caveola. It catalyses the reaction K(+)(in) = K(+)(out). In terms of biological role, voltage-gated potassium channel that mediates transmembrane potassium transport in excitable membranes, primarily in the brain. Mediates the major part of the dendritic A-type current I(SA) in brain neurons. This current is activated at membrane potentials that are below the threshold for action potentials. It regulates neuronal excitability, prolongs the latency before the first spike in a series of action potentials, regulates the frequency of repetitive action potential firing, shortens the duration of action potentials and regulates the back-propagation of action potentials from the neuronal cell body to the dendrites. Contributes to the regulation of the circadian rhythm of action potential firing in suprachiasmatic nucleus neurons, which regulates the circadian rhythm of locomotor activity. Functions downstream of the metabotropic glutamate receptor GRM5 and plays a role in neuronal excitability and in nociception mediated by activation of GRM5. Mediates the transient outward current I(to) in rodent heart left ventricle apex cells, but not in human heart, where this current is mediated by another family member. Forms tetrameric potassium-selective channels through which potassium ions pass in accordance with their electrochemical gradient. The channel alternates between opened and closed conformations in response to the voltage difference across the membrane. Can form functional homotetrameric channels and heterotetrameric channels that contain variable proportions of KCND2 and KCND3; channel properties depend on the type of pore-forming alpha subunits that are part of the channel. In vivo, membranes probably contain a mixture of heteromeric potassium channel complexes. Interaction with specific isoforms of the regulatory subunits KCNIP1, KCNIP2, KCNIP3 or KCNIP4 strongly increases expression at the cell surface and thereby increases channel activity; it modulates the kinetics of channel activation and inactivation, shifts the threshold for channel activation to more negative voltage values, shifts the threshold for inactivation to less negative voltages and accelerates recovery after inactivation. Likewise, interaction with DPP6 or DPP10 promotes expression at the cell membrane and regulates both channel characteristics and activity. Upon depolarization, the channel goes from a resting closed state (C state) to an activated but non-conducting state (C* state), from there, the channel may either inactivate (I state) or open (O state). The chain is A-type voltage-gated potassium channel KCND2 from Oryctolagus cuniculus (Rabbit).